A 262-amino-acid polypeptide reads, in one-letter code: Alpha/beta-gliadin A-I (262 aa).

The first 20 residues, 1 to 20 (MKTFLILALLAIVATTATTA), serve as a signal peptide directing secretion. 3 disordered regions span residues 51 to 73 (LGQQQPFPPQQPYPQPQPFPSQQ), 87 to 120 (PYSQPQPFRPQQPYPQPQPQYSQPQQPISQQQQQ), and 225 to 251 (YPLGQGSFRPSQQNPQAQGSVQPQQLP). 2 stretches are compositionally biased toward pro residues: residues 56-71 (PFPPQQPYPQPQPFPS) and 93-104 (PFRPQQPYPQPQ). Positions 105–120 (PQYSQPQQPISQQQQQ) are enriched in low complexity. Residues 232–251 (FRPSQQNPQAQGSVQPQQLP) are compositionally biased toward polar residues.

This sequence belongs to the gliadin/glutenin family. Substrate of transglutaminase.

Functionally, gliadin is the major seed storage protein in wheat. The chain is Alpha/beta-gliadin A-I from Triticum aestivum (Wheat).